Consider the following 415-residue polypeptide: Squalene synthase 3 (415 aa).

Transmembrane regions (helical) follow at residues 281 to 301 (AIFR…ALCY) and 392 to 412 (LIII…SNLP).

The protein belongs to the phytoene/squalene synthase family. It depends on Mg(2+) as a cofactor. Mn(2+) is required as a cofactor.

Its subcellular location is the endoplasmic reticulum membrane. The enzyme catalyses 2 (2E,6E)-farnesyl diphosphate + NADH + H(+) = squalene + 2 diphosphate + NAD(+). The catalysed reaction is 2 (2E,6E)-farnesyl diphosphate + NADPH + H(+) = squalene + 2 diphosphate + NADP(+). Its pathway is terpene metabolism; lanosterol biosynthesis; lanosterol from farnesyl diphosphate: step 1/3. In terms of biological role, component of the triterpene saponins (e.g. ginsenosides or panaxosides) and phytosterols biosynthetic pathways. Catalyzes the biosynthesis of squalene. This is Squalene synthase 3 from Panax ginseng (Korean ginseng).